We begin with the raw amino-acid sequence, 383 residues long: Trihelix transcription factor ASIL1 (383 aa).

4 disordered regions span residues 1 to 32 (MEDD…LPTN), 61 to 94 (HTPS…DDCW), 189 to 295 (IASS…SGVG), and 346 to 383 (EITQ…NVSS). Gly residues predominate over residues 66–88 (TGGGGSGNRNGRGGGGGSGGGGG). Positions 94–153 (WSEEATKVLIEAWGDRFSEPGKGTLKQQHWKEVAEIVNKSRQCKYPKTDIQCKNRIDTVK) constitute a Myb-like domain. The span at 206–225 (NSRSSMFKRQTKGNQIVQQQ) shows a compositional bias: polar residues. Positions 226–235 (QEKRGSDSMR) are enriched in basic and acidic residues. Positions 228–241 (KRGSDSMRWHFRKR) match the Bipartite nuclear localization signal motif. Positions 246-262 (TESESDPEPEASPEESA) are enriched in acidic residues. A compositionally biased stretch (low complexity) spans 263 to 274 (ESLPPLQPIQPL). The stretch at 304-365 (FTEAYEKAET…ERSRQRGERR (62 aa)) forms a coiled coil. Positions 356-367 (ERSRQRGERRIV) are enriched in basic and acidic residues.

The protein resides in the nucleus. In terms of biological role, transcription repressor that binds specific DNA sequence such as the GT-box-like motif 5'-CGTGATT-3' in the AT2S3 promoter. Negative regulator of seed maturation genes during seed germination and seedling development. May target GT-box-containing embryonic genes by competing with the binding of transcriptional activators to this promoter region. Contributes to the maintenance and control of seed filling and may repress the maturation program during early embryogenesis. This is Trihelix transcription factor ASIL1 from Arabidopsis thaliana (Mouse-ear cress).